The sequence spans 326 residues: MEMO1 family protein TTHA0924 (326 aa).

Belongs to the MEMO1 family.

This chain is MEMO1 family protein TTHA0924, found in Thermus thermophilus (strain ATCC 27634 / DSM 579 / HB8).